Consider the following 585-residue polypeptide: Cytidine monophosphate-N-acetylneuraminic acid hydroxylase (585 aa).

The region spanning 9–107 (LSPVEVANLK…VEMDENNRLL (99 aa)) is the Rieske domain. Residues cysteine 49, histidine 51, cysteine 70, and histidine 73 each contribute to the [2Fe-2S] cluster site.

Belongs to the CMP-Neu5Ac hydroxylase family. The cofactor is [2Fe-2S] cluster.

It localises to the cytoplasm. It carries out the reaction CMP-N-acetyl-beta-neuraminate + 2 Fe(II)-[cytochrome b5] + O2 + 2 H(+) = CMP-N-glycoloyl-beta-neuraminate + 2 Fe(III)-[cytochrome b5] + H2O. Its pathway is amino-sugar metabolism; N-acetylneuraminate metabolism. Its function is as follows. Sialic acids are components of carbohydrate chains of glycoconjugates and are involved in cell-cell recognition and cell-pathogen interactions. Catalyzes the conversion of CMP-N-acetylneuraminic acid (CMP-Neu5Ac) into its hydroxylated derivative CMP-N-glycolylneuraminic acid (CMP-Neu5Gc), a sialic acid abundantly expressed at the surface of many cells. In Pongo pygmaeus (Bornean orangutan), this protein is Cytidine monophosphate-N-acetylneuraminic acid hydroxylase (CMAH).